A 365-amino-acid polypeptide reads, in one-letter code: tRNA/tmRNA (uracil-C(5))-methyltransferase (365 aa).

Residues glutamine 189, tyrosine 217, asparagine 222, glutamate 238, and aspartate 298 each coordinate S-adenosyl-L-methionine. Cysteine 323 (nucleophile) is an active-site residue. Glutamate 357 serves as the catalytic Proton acceptor.

This sequence belongs to the class I-like SAM-binding methyltransferase superfamily. RNA M5U methyltransferase family. TrmA subfamily.

It catalyses the reaction uridine(54) in tRNA + S-adenosyl-L-methionine = 5-methyluridine(54) in tRNA + S-adenosyl-L-homocysteine + H(+). The catalysed reaction is uridine(341) in tmRNA + S-adenosyl-L-methionine = 5-methyluridine(341) in tmRNA + S-adenosyl-L-homocysteine + H(+). Its function is as follows. Dual-specificity methyltransferase that catalyzes the formation of 5-methyluridine at position 54 (m5U54) in all tRNAs, and that of position 341 (m5U341) in tmRNA (transfer-mRNA). The chain is tRNA/tmRNA (uracil-C(5))-methyltransferase from Proteus mirabilis (strain HI4320).